A 210-amino-acid chain; its full sequence is 3-hexulose-6-phosphate synthase (210 aa).

Belongs to the HPS/KGPDC family. HPS subfamily.

It catalyses the reaction D-ribulose 5-phosphate + formaldehyde = D-arabino-hex-3-ulose 6-phosphate. Its pathway is one-carbon metabolism; formaldehyde assimilation via RuMP pathway; D-fructose 6-phosphate from D-ribulose 5-phosphate and formaldehyde: step 1/2. Functionally, catalyzes the condensation of ribulose 5-phosphate with formaldehyde to form 3-hexulose 6-phosphate. This chain is 3-hexulose-6-phosphate synthase, found in Staphylococcus aureus (strain bovine RF122 / ET3-1).